A 293-amino-acid chain; its full sequence is Glutamyl-Q tRNA(Asp) synthetase (293 aa).

L-glutamate-binding positions include 8 to 12 (RFAPT) and glutamate 44. Residues 11-21 (PTPSGYLHFGS) carry the 'HIGH' region motif. Zn(2+)-binding residues include cysteine 100, cysteine 102, tyrosine 114, and cysteine 118. L-glutamate-binding residues include tyrosine 171 and arginine 189. The 'KMSKS' region signature appears at 227–231 (KLGKS). An ATP-binding site is contributed by lysine 230.

This sequence belongs to the class-I aminoacyl-tRNA synthetase family. GluQ subfamily. It depends on Zn(2+) as a cofactor.

Its function is as follows. Catalyzes the tRNA-independent activation of glutamate in presence of ATP and the subsequent transfer of glutamate onto a tRNA(Asp). Glutamate is transferred on the 2-amino-5-(4,5-dihydroxy-2-cyclopenten-1-yl) moiety of the queuosine in the wobble position of the QUC anticodon. The chain is Glutamyl-Q tRNA(Asp) synthetase from Pseudomonas aeruginosa (strain ATCC 15692 / DSM 22644 / CIP 104116 / JCM 14847 / LMG 12228 / 1C / PRS 101 / PAO1).